Reading from the N-terminus, the 495-residue chain is Glucose-6-phosphate 1-dehydrogenase (495 aa).

NADP(+)-binding positions include 11 to 18, Arg45, 84 to 85, and Lys147; these read GASGDLAK and DV. 4 residues coordinate substrate: His177, Lys181, Glu215, and Asp234. His239 functions as the Proton acceptor in the catalytic mechanism. Substrate-binding residues include Lys339 and Lys344.

It belongs to the glucose-6-phosphate dehydrogenase family.

It carries out the reaction D-glucose 6-phosphate + NADP(+) = 6-phospho-D-glucono-1,5-lactone + NADPH + H(+). Its pathway is carbohydrate degradation; pentose phosphate pathway; D-ribulose 5-phosphate from D-glucose 6-phosphate (oxidative stage): step 1/3. In terms of biological role, catalyzes the oxidation of glucose 6-phosphate to 6-phosphogluconolactone. The chain is Glucose-6-phosphate 1-dehydrogenase from Streptococcus pneumoniae serotype 4 (strain ATCC BAA-334 / TIGR4).